A 1236-amino-acid polypeptide reads, in one-letter code: MTYASKYKKLTPIDHVLLRPEMYVGSIETQPTPMYIFDPEKGRMVWETMRVNQGLLKIVDEILLNAADNINNSKGSVRQTYISIHISDTGEITVENDGAGLPIVRSREHKMYIPEMVFGHLLTSSNYNNDSTSTTAGRHGYGAKLTNILSTKFSVVCRTDGRESHMSWTDHMRMATAPRVNRVDPKEKSVTRVKFMPDYAHFGFPNASISLDMKRVLHKRIMDLAAMFSKIEVRLNNVPFGFRTFTDYARLYSLPGLDGSMPPEPFVYTSPNGSVAYVPQLTQSPKRIVGVVNGVVTYNGGTHCNAAMDILDSCLDSLSKNFKKNGKVVDTNRVQRHFTVLVFLIQTQPKFDSQSKARLVSTVTMPRMPKNTLEKYLERMPFLEAHVNSMDDQLANELNKEIGAGRRLSSKTLISAITKLVDATSSQPDGRNIRTLIITEGDSAKALALNSLSSEQKKYCGVFPLRGKLLNVRNKNLKRLKTCKGLQDLFLSLGLELGKEYRSPAELRYQRLLVMTDQDADGSHIKGLVINAFESLWPKLLQNNPGYISLFSTPIVKIKVSGKSKEVIAFHSFRDFHRWQRAHPSARYTAKYYKGLGTSTTAEGKEYFADMEKNIMQLTVDARDHQLLDSVFDAAEVEWRKEWMTKANAFQGEVDIDRSKKTLTIPEFVHKEMVHFALVGNARAIPHCVDGLKPSQRKILWAMLRRHNSEASKVAQLSGYISEASAFHHGEASLQETIVKMAQNFTGGNNINLLVPEGQFGSRQQLGNDHAAPRYIFTKLSRFGRLLFPEEDDPLLDYMDEEGTFVEPHHYVPILPMLLCNGAVGIGFGFATTIPSFHPLDVSAAVRAMINGESAKQVVRNLVPWAVGFQGTVRRGPDNEFIAVGKYTAHPNGRFHISEIPWMTSIEAFRLHISSLASADVVQRIADYSGANHIDIDLIVRDGSLTTWAECETDLALAQRIYINGTVFSPTGTLSPIDSDLSPVLQWHYDRRLDLYKRRRTRKIGLMKMDLARLQSTRKFVEHFRQGQIDFLNATDDTLHKTCVKLGLVRVDESFDYILKKPITFFTRTSTEKLQADIAKTQAQIEELKRTTPVKMWLTELDKFDKTFQEYERVLINSIQKEQRSSSITGGVELPALRQPLLMLGASAKGATAYRVHACQYEKPPPSKRRPGESVGGARPSDSAARTVGKRLVGSRSEFKNKKPMSRKNNVKVSLSTRVAQXPGAQLGRLLPHVLM.

Residues asparagine 65, asparagine 96, serine 124–asparagine 126, glycine 137–lysine 144, and glutamine 354–lysine 356 each bind ATP. A Toprim domain is found at arginine 434 to isoleucine 548. Residues glutamate 440, aspartate 517, and aspartate 519 each coordinate Mg(2+). The Topo IIA-type catalytic domain maps to isoleucine 685 to leucine 1101. The active-site O-(5'-phospho-DNA)-tyrosine intermediate is tyrosine 775. Residues alanine 956–glycine 965 form an interaction with DNA region. A disordered region spans residues tyrosine 1161–valine 1211.

The protein belongs to the type II topoisomerase family. In terms of assembly, homodimer. Mg(2+) is required as a cofactor. The cofactor is Mn(2+). Requires Ca(2+) as cofactor.

The protein localises to the nucleus. It catalyses the reaction ATP-dependent breakage, passage and rejoining of double-stranded DNA.. Functionally, control of topological states of DNA by transient breakage and subsequent rejoining of DNA strands. Topoisomerase II makes double-strand breaks. The polypeptide is DNA topoisomerase 2 (TOP2) (Leishmania chagasi).